The following is a 248-amino-acid chain: Sugar fermentation stimulation protein homolog (248 aa).

This sequence belongs to the SfsA family.

This Prochlorococcus marinus subsp. pastoris (strain CCMP1986 / NIES-2087 / MED4) protein is Sugar fermentation stimulation protein homolog.